The sequence spans 468 residues: tRNA modification GTPase MnmE (468 aa).

(6S)-5-formyl-5,6,7,8-tetrahydrofolate-binding residues include arginine 29, glutamate 97, and lysine 136. In terms of domain architecture, TrmE-type G spans 232 to 390; the sequence is GFELAIVGRP…VVAHIVARME (159 aa). Asparagine 242 provides a ligand contact to K(+). GTP is bound by residues 242–247, 261–267, and 286–289; these read NVGKSS, TDLAGTT, and DTAG. Position 246 (serine 246) interacts with Mg(2+). K(+) is bound by residues threonine 261, leucine 263, and threonine 266. Residue threonine 267 participates in Mg(2+) binding. Lysine 468 provides a ligand contact to (6S)-5-formyl-5,6,7,8-tetrahydrofolate.

The protein belongs to the TRAFAC class TrmE-Era-EngA-EngB-Septin-like GTPase superfamily. TrmE GTPase family. In terms of assembly, homodimer. Heterotetramer of two MnmE and two MnmG subunits. K(+) serves as cofactor.

It is found in the cytoplasm. Exhibits a very high intrinsic GTPase hydrolysis rate. Involved in the addition of a carboxymethylaminomethyl (cmnm) group at the wobble position (U34) of certain tRNAs, forming tRNA-cmnm(5)s(2)U34. The sequence is that of tRNA modification GTPase MnmE from Magnetococcus marinus (strain ATCC BAA-1437 / JCM 17883 / MC-1).